A 375-amino-acid polypeptide reads, in one-letter code: Alpha-2,8-sialyltransferase 8B (375 aa).

Residues 1-6 (MQLQFR) are Cytoplasmic-facing. A helical; Signal-anchor for type II membrane protein transmembrane segment spans residues 7–23 (SWMLAALTLLVVFLIFA). Residues 24–375 (DISEIEEEIG…LTVGQCDGAT (352 aa)) lie on the Lumenal side of the membrane. Residues N60, N72, N89, and N134 are each glycosylated (N-linked (GlcNAc...) asparagine). 2 cysteine pairs are disulfide-bonded: C157-C307 and C171-C371. 2 residues coordinate CMP-N-acetyl-beta-neuraminate: N162 and N185. 2 N-linked (GlcNAc...) asparagine glycosylation sites follow: N219 and N234. CMP-N-acetyl-beta-neuraminate is bound by residues T294, T295, G296, W316, Y329, and H330. H346 serves as the catalytic Proton donor/acceptor.

This sequence belongs to the glycosyltransferase 29 family. Post-translationally, autopolysialylated. Autopolysialylation is not a prerequisite for the polysialylation acitity, but enhances the polysialylation acitity. In terms of tissue distribution, highly expressed in fetal brain, kidney and heart and to a much lesser extent in adult heart and thymus.

It is found in the golgi apparatus membrane. The protein resides in the secreted. The protein localises to the cell membrane. The enzyme catalyses [N-acetyl-alpha-D-neuraminosyl-(2-&gt;8)](n) + CMP-N-acetyl-beta-neuraminate = [N-acetyl-alpha-D-neuraminosyl-(2-&gt;8)](n+1) + CMP + H(+). The protein operates within protein modification; protein glycosylation. Catalyzes the transfer of a sialic acid from a CMP-linked sialic acid donor onto a terminal alpha-2,3-, alpha-2,6-, or alpha-2,8-linked sialic acid of an N-linked glycan acceptor through alpha-2,8-linkages. Therefore, participates in polysialic acid synthesis on various sialylated N-acetyllactosaminyl oligosaccharides (alpha-2,3-, alpha-2,6-, or alpha-2,8-linked sialic acid), including NCAM1, NCAM1 N-glycans, FETUB N-glycans, and to a lesser extent sialylparagloboside (SPG) and AHSG, which does not require the initial addition of an alpha 2,8-sialic acid. However, does not exhibit sialic acid-polymerase activity. Catalyzes polysialic acid synthesis in the hippocampal on NCAM1 and supports neurite outgrowth. ST8SIA2-mediated polysialylation influences on oligodendrocyte differentiation and may promote the integrity of myelin and axons. This Homo sapiens (Human) protein is Alpha-2,8-sialyltransferase 8B.